A 227-amino-acid polypeptide reads, in one-letter code: Gamma-glutamyl-hercynylcysteine sulfoxide hydrolase (227 aa).

Cys2 functions as the Nucleophile in the catalytic mechanism. In terms of domain architecture, Glutamine amidotransferase type-2 spans 2 to 227 (CRHVAWLGAP…RDAHVVVTPL (226 aa)).

It catalyses the reaction gamma-L-glutamyl-hercynylcysteine S-oxide + H2O = S-(hercyn-2-yl)-L-cysteine S-oxide + L-glutamate. Its pathway is amino-acid biosynthesis; ergothioneine biosynthesis. In terms of biological role, catalyzes the hydrolysis of the gamma-glutamyl amide bond of hercynyl-gamma-L-glutamyl-L-cysteine sulfoxide to produce hercynylcysteine sulfoxide, a step in the biosynthesis pathway of ergothioneine. The polypeptide is Gamma-glutamyl-hercynylcysteine sulfoxide hydrolase (Mycolicibacterium smegmatis (strain ATCC 700084 / mc(2)155) (Mycobacterium smegmatis)).